Reading from the N-terminus, the 195-residue chain is Phosphoheptose isomerase (195 aa).

In terms of domain architecture, SIS spans 36–195; it reads VSKVLQSGNT…IVEYNLFKME (160 aa). 51-53 contacts substrate; sequence NGG. Residues His60 and Glu64 each contribute to the Zn(2+) site. Substrate is bound by residues Glu64, 95 to 96, 121 to 123, Ser126, and Gln173; these read ND and STS. 2 residues coordinate Zn(2+): Gln173 and His181.

It belongs to the SIS family. GmhA subfamily. It depends on Zn(2+) as a cofactor.

The protein resides in the cytoplasm. The enzyme catalyses 2 D-sedoheptulose 7-phosphate = D-glycero-alpha-D-manno-heptose 7-phosphate + D-glycero-beta-D-manno-heptose 7-phosphate. The protein operates within carbohydrate biosynthesis; D-glycero-D-manno-heptose 7-phosphate biosynthesis; D-glycero-alpha-D-manno-heptose 7-phosphate and D-glycero-beta-D-manno-heptose 7-phosphate from sedoheptulose 7-phosphate: step 1/1. Catalyzes the isomerization of sedoheptulose 7-phosphate in D-glycero-D-manno-heptose 7-phosphate. This Leptospira borgpetersenii serovar Hardjo-bovis (strain JB197) protein is Phosphoheptose isomerase.